The chain runs to 216 residues: Ras-related protein RABE1c (216 aa).

A GTP-binding site is contributed by 22–29 (GDSGVGKS). Residues 44–52 (FITTIGIDF) carry the Effector region motif. GTP contacts are provided by residues 70 to 74 (DTAGQ), 128 to 131 (NKAD), and 159 to 160 (SA). Residues cysteine 213 and cysteine 214 are each lipidated (S-geranylgeranyl cysteine).

This sequence belongs to the small GTPase superfamily. Rab family. In terms of assembly, interacts with PI5K2.

It is found in the golgi apparatus membrane. Its subcellular location is the cell membrane. In terms of biological role, involved in membrane trafficking from the Golgi to the plasma membrane. This chain is Ras-related protein RABE1c (RABE1C), found in Arabidopsis thaliana (Mouse-ear cress).